Reading from the N-terminus, the 267-residue chain is Probable 3-methyl-2-oxobutanoate hydroxymethyltransferase (267 aa).

It belongs to the PanB family.

It carries out the reaction 3-methyl-2-oxobutanoate + (6R)-5,10-methylene-5,6,7,8-tetrahydrofolate + H2O = 2-dehydropantoate + (6S)-5,6,7,8-tetrahydrofolate. It participates in cofactor biosynthesis; (R)-pantothenate biosynthesis; (R)-pantoate from 3-methyl-2-oxobutanoate: step 1/2. This chain is Probable 3-methyl-2-oxobutanoate hydroxymethyltransferase, found in Schizosaccharomyces pombe (strain 972 / ATCC 24843) (Fission yeast).